The following is a 390-amino-acid chain: Chorismate synthase 1 (390 aa).

Residues arginine 39 and arginine 45 each coordinate NADP(+). FMN contacts are provided by residues 132–134 (RSS), 253–254 (NA), glycine 298, 313–317 (KPIPT), and arginine 339.

It belongs to the chorismate synthase family. Homotetramer. The cofactor is FMNH2.

It catalyses the reaction 5-O-(1-carboxyvinyl)-3-phosphoshikimate = chorismate + phosphate. It participates in metabolic intermediate biosynthesis; chorismate biosynthesis; chorismate from D-erythrose 4-phosphate and phosphoenolpyruvate: step 7/7. In terms of biological role, catalyzes the anti-1,4-elimination of the C-3 phosphate and the C-6 proR hydrogen from 5-enolpyruvylshikimate-3-phosphate (EPSP) to yield chorismate, which is the branch point compound that serves as the starting substrate for the three terminal pathways of aromatic amino acid biosynthesis. This reaction introduces a second double bond into the aromatic ring system. This is Chorismate synthase 1 from Bacillus anthracis.